Consider the following 68-residue polypeptide: Negative regulator of P-body association (68 aa).

Positions 1–68 are disordered; the sequence is MGDQPCASGR…LKSHPPPPEK (68 aa).

As to quaternary structure, interacts with mRNA decapping proteins DCP1A, DCP2 and EDC4.

The protein localises to the cytoplasm. It localises to the P-body. Functionally, promotes dispersal of P-body components and is likely to play a role in the mRNA decapping process. In Homo sapiens (Human), this protein is Negative regulator of P-body association.